The chain runs to 342 residues: N-acetyl-gamma-glutamyl-phosphate reductase (342 aa).

Cys-146 is a catalytic residue.

This sequence belongs to the NAGSA dehydrogenase family. Type 1 subfamily.

It localises to the cytoplasm. The enzyme catalyses N-acetyl-L-glutamate 5-semialdehyde + phosphate + NADP(+) = N-acetyl-L-glutamyl 5-phosphate + NADPH + H(+). It functions in the pathway amino-acid biosynthesis; L-arginine biosynthesis; N(2)-acetyl-L-ornithine from L-glutamate: step 3/4. In terms of biological role, catalyzes the NADPH-dependent reduction of N-acetyl-5-glutamyl phosphate to yield N-acetyl-L-glutamate 5-semialdehyde. The protein is N-acetyl-gamma-glutamyl-phosphate reductase of Streptomyces coelicolor (strain ATCC BAA-471 / A3(2) / M145).